The chain runs to 96 residues: SPbeta prophage-derived uncharacterized protein YosV (96 aa).

This Bacillus subtilis (strain 168) protein is SPbeta prophage-derived uncharacterized protein YosV (yosV).